The primary structure comprises 200 residues: High mobility group protein 1 homolog (200 aa).

2 DNA-binding regions (HMG box) span residues 11–81 (PRGR…QSYK) and 100–168 (PKRN…AEYK). Residues 64–86 (EKSMRDKVRYDREMQSYKPPKGE) are compositionally biased toward basic and acidic residues. Disordered regions lie at residues 64-103 (EKSM…PKRN) and 169-200 (AKAK…DDSD). Acidic residues predominate over residues 190–200 (SSDDSSSDDSD).

Belongs to the HMGB family.

The protein localises to the nucleus. Its subcellular location is the chromosome. Functionally, binds preferentially single-stranded DNA and unwinds double-stranded DNA. This chain is High mobility group protein 1 homolog (HMG1), found in Strongylocentrotus purpuratus (Purple sea urchin).